A 219-amino-acid polypeptide reads, in one-letter code: Probable nicotinate-nucleotide adenylyltransferase (219 aa).

It belongs to the NadD family.

It catalyses the reaction nicotinate beta-D-ribonucleotide + ATP + H(+) = deamido-NAD(+) + diphosphate. Its pathway is cofactor biosynthesis; NAD(+) biosynthesis; deamido-NAD(+) from nicotinate D-ribonucleotide: step 1/1. Functionally, catalyzes the reversible adenylation of nicotinate mononucleotide (NaMN) to nicotinic acid adenine dinucleotide (NaAD). The polypeptide is Probable nicotinate-nucleotide adenylyltransferase (Pseudomonas entomophila (strain L48)).